The primary structure comprises 688 residues: MSVNSEKSSSSERPEPQQKAPLVPPPPPPPPPPPPPLPDPTPPEPEEEILGSDDEEQEDPADYCKGGYHPVKIGDLFNGRYHVIRKLGWGHFSTVWLCWDMQGKRFVAMKVVKSAQHYTETALDEIKLLKCVRESDPSDPNKDMVVQLIDDFKISGMNGIHVCMVFEVLGHHLLKWIIKSNYQGLPVRCVKSIIRQVLQGLDYLHSKCKIIHTDIKPENILMCVDDAYVRRMAAEATEWQKAGAPPPSGSAVSTAPQQKPIGKISKNKKKKLKKKQKRQAELLEKRLQEIEELEREAERKIIEENITSAAPSNDQDGEYCPEVKLKTTGLEEAAEAETAKDNGEAEDQEEKEDAEKENIEKDEDDVDQELANIDPTWIESPKTNGHIENGPFSLEQQLDDEDDDEEDCPNPEEYNLDEPNAESDYTYSSSYEQFNGELPNGRHKIPESQFPEFSTSLFSGSLEPVACGSVLSEGSPLTEQEESSPSHDRSRTVSASSTGDLPKAKTRAADLLVNPLDPRNADKIRVKIADLGNACWVHKHFTEDIQTRQYRSIEVLIGAGYSTPADIWSTACMAFELATGDYLFEPHSGEDYSRDEDHIAHIIELLGSIPRHFALSGKYSREFFNRRGELRHITKLKPWSLFDVLVEKYGWPHEDAAQFTDFLIPMLEMVPEKRASAGECLRHPWLNS.

Positions 1-65 (MSVNSEKSSS…EQEDPADYCK (65 aa)) are disordered. Pro residues predominate over residues 22–43 (LVPPPPPPPPPPPPPLPDPTPP). The span at 44–61 (EPEEEILGSDDEEQEDPA) shows a compositional bias: acidic residues. Serine 52 is subject to Phosphoserine. In terms of domain architecture, Protein kinase spans 81–684 (YHVIRKLGWG…ASAGECLRHP (604 aa)). ATP contacts are provided by residues 87–95 (LGWGHFSTV) and lysine 110. Aspartate 214 acts as the Proton acceptor in catalysis. Disordered regions lie at residues 239–277 (WQKAGAPPPSGSAVSTAPQQKPIGKISKNKKKKLKKKQK), 329–444 (GLEE…GRHK), and 469–501 (SVLSEGSPLTEQEESSPSHDRSRTVSASSTGDL). Over residues 265–277 (SKNKKKKLKKKQK) the composition is skewed to basic residues. Serine 380 bears the Phosphoserine mark. Acidic residues predominate over residues 397-421 (QLDDEDDDEEDCPNPEEYNLDEPNA). The span at 423 to 433 (SDYTYSSSYEQ) shows a compositional bias: polar residues. Residue serine 475 is modified to Phosphoserine. A Phosphothreonine modification is found at threonine 478. A phosphoserine mark is found at serine 484, serine 486, and serine 490. A Phosphothreonine; by PKB/AKT1 modification is found at threonine 492. 2 positions are modified to phosphoserine: serine 494 and serine 497. The residue at position 588 (serine 588) is a Phosphoserine; by CK2.

This sequence belongs to the protein kinase superfamily. CMGC Ser/Thr protein kinase family. Associates with U4/U6-U5 tri-small nuclear ribonucleoproteins (U4/U6-U5 tri-snRNPs). Interacts with PKB/AKT1 in a phosphorylation-dependent manner. The phosphorylated form (by PKB/AKT1) interacts with YWHAB and YWHAE. Interaction with YWHAB suppresses its cleavage by caspases and inhibits the release of its N-terminal pro-apoptotic fragment. Interacts with SFN. Interacts with ACIN1. Interacts with POLR2A/RNA polymerase II; the interaction occurs during the co-transcriptional formation of inappropriate R-loops. Requires Mg(2+) as cofactor. Post-translationally, phosphorylation at Thr-492 by PKB/AKT1 enhances its stimulatory activity in triggering cyclin-D1 (CCND1) expression and promoting apoptosis in neurons, which can be blocked by YWHAB. It also enhances its protein kinase activity toward ACIN1 and SRSF2, promotes its nuclear translocation and prevents its proteolytic cleavage. Proteolytically cleaved at Asp-139 and Asp-403 by caspase-3 during apoptotic cell death. Cleavage at Asp-139 which is the major site of cleavage, produces a small N-terminal fragment that translocates into nucleus and promotes VP16-induced apoptosis. In terms of tissue distribution, highly expressed in brain, moderately expressed in heart and skeletal muscle and at low levels in lung, liver, and kidney.

It localises to the cytoplasm. It is found in the nucleus. Its subcellular location is the nucleoplasm. The protein resides in the nucleus speckle. The protein localises to the chromosome. It carries out the reaction L-seryl-[protein] + ATP = O-phospho-L-seryl-[protein] + ADP + H(+). The enzyme catalyses L-threonyl-[protein] + ATP = O-phospho-L-threonyl-[protein] + ADP + H(+). Its activity is regulated as follows. Activated by phosphorylation on Ser-52 and Ser-588. Functionally, serine/arginine-rich protein-specific kinase which specifically phosphorylates its substrates at serine residues located in regions rich in arginine/serine dipeptides, known as RS domains and is involved in the phosphorylation of SR splicing factors and the regulation of splicing. Promotes neuronal apoptosis by up-regulating cyclin-D1 (CCND1) expression. This is done by the phosphorylation of SRSF2, leading to the suppression of p53/TP53 phosphorylation thereby relieving the repressive effect of p53/TP53 on cyclin-D1 (CCND1) expression. Phosphorylates ACIN1, and redistributes it from the nuclear speckles to the nucleoplasm, resulting in cyclin A1 but not cyclin A2 up-regulation. Plays an essential role in spliceosomal B complex formation via the phosphorylation of DDX23/PRP28. Probably by phosphorylating DDX23, leads to the suppression of incorrect R-loops formed during transcription; R-loops are composed of a DNA:RNA hybrid and the associated non-template single-stranded DNA. Can mediate hepatitis B virus (HBV) core protein phosphorylation. Plays a negative role in the regulation of HBV replication through a mechanism not involving the phosphorylation of the core protein but by reducing the packaging efficiency of the pregenomic RNA (pgRNA) without affecting the formation of the viral core particles. In Homo sapiens (Human), this protein is SRSF protein kinase 2.